The sequence spans 490 residues: Glutamyl-tRNA(Gln) amidotransferase subunit A (490 aa).

Catalysis depends on charge relay system residues K78 and S158. The Acyl-ester intermediate role is filled by S182.

This sequence belongs to the amidase family. GatA subfamily. Heterotrimer of A, B and C subunits.

The enzyme catalyses L-glutamyl-tRNA(Gln) + L-glutamine + ATP + H2O = L-glutaminyl-tRNA(Gln) + L-glutamate + ADP + phosphate + H(+). In terms of biological role, allows the formation of correctly charged Gln-tRNA(Gln) through the transamidation of misacylated Glu-tRNA(Gln) in organisms which lack glutaminyl-tRNA synthetase. The reaction takes place in the presence of glutamine and ATP through an activated gamma-phospho-Glu-tRNA(Gln). This chain is Glutamyl-tRNA(Gln) amidotransferase subunit A, found in Caulobacter sp. (strain K31).